The primary structure comprises 376 residues: Alcohol dehydrogenase class-3 (376 aa).

N-acetylserine is present on Ser-1. The Zn(2+) site is built by Cys-47, His-69, Cys-99, Cys-102, Cys-105, Cys-113, and Cys-176.

Belongs to the zinc-containing alcohol dehydrogenase family. Class-III subfamily. Homodimer. Zn(2+) is required as a cofactor. As to expression, liver and gut.

The protein resides in the cytoplasm. The catalysed reaction is a primary alcohol + NAD(+) = an aldehyde + NADH + H(+). The enzyme catalyses a secondary alcohol + NAD(+) = a ketone + NADH + H(+). It carries out the reaction S-(hydroxymethyl)glutathione + NADP(+) = S-formylglutathione + NADPH + H(+). It catalyses the reaction S-(hydroxymethyl)glutathione + NAD(+) = S-formylglutathione + NADH + H(+). The catalysed reaction is S-nitrosoglutathione + NADH + H(+) = S-(hydroxysulfenamide)glutathione + NAD(+). Functionally, class-III ADH is remarkably ineffective in oxidizing ethanol, but it readily catalyzes the oxidation of long-chain primary alcohols and the oxidation of S-(hydroxymethyl) glutathione. Also acts as a S-nitroso-glutathione reductase by catalyzing the NADH-dependent reduction of S-nitrosoglutathione, thereby regulating protein S-nitrosylation. The polypeptide is Alcohol dehydrogenase class-3 (Myxine glutinosa (Atlantic hagfish)).